A 329-amino-acid chain; its full sequence is Flotillin-like protein FloA (329 aa).

2 helical membrane passes run 6-26 (FIVI…FVPI) and 27-47 (GLWI…LVGM).

The protein belongs to the flotillin-like FloA family. Homooligomerizes.

Its subcellular location is the cell membrane. The protein localises to the membrane raft. Found in functional membrane microdomains (FMM) that may be equivalent to eukaryotic membrane rafts. FMMs are highly dynamic and increase in number as cells age. Flotillins are thought to be important factors in membrane fluidity. This is Flotillin-like protein FloA from Staphylococcus aureus (strain JH1).